Reading from the N-terminus, the 774-residue chain is DNA ligase 3 (774 aa).

Positions 1–25 are disordered; that stretch reads MPPKKRMKNGSSLKSTSKKGEKSRN. Catalysis depends on Lys433, which acts as the N6-AMP-lysine intermediate.

It belongs to the ATP-dependent DNA ligase family.

The protein resides in the nucleus. It carries out the reaction ATP + (deoxyribonucleotide)n-3'-hydroxyl + 5'-phospho-(deoxyribonucleotide)m = (deoxyribonucleotide)n+m + AMP + diphosphate.. The chain is DNA ligase 3 (adl1) from Schizosaccharomyces pombe (strain 972 / ATCC 24843) (Fission yeast).